Reading from the N-terminus, the 131-residue chain is UPF0102 protein YraN (131 aa).

Polar residues predominate over residues 1–19; that stretch reads MATVPTRSGSPRQLTTKQT. Positions 1-20 are disordered; that stretch reads MATVPTRSGSPRQLTTKQTG.

Belongs to the UPF0102 family.

The polypeptide is UPF0102 protein YraN (Shigella boydii serotype 18 (strain CDC 3083-94 / BS512)).